Reading from the N-terminus, the 154-residue chain is 6,7-dimethyl-8-ribityllumazine synthase (154 aa).

Residues phenylalanine 22, 56 to 58 (AFE), and 80 to 82 (AVI) contribute to the 5-amino-6-(D-ribitylamino)uracil site. 85 to 86 (ST) lines the (2S)-2-hydroxy-3-oxobutyl phosphate pocket. Residue histidine 88 is the Proton donor of the active site. Phenylalanine 113 contributes to the 5-amino-6-(D-ribitylamino)uracil binding site. (2S)-2-hydroxy-3-oxobutyl phosphate is bound at residue arginine 127.

Belongs to the DMRL synthase family.

It catalyses the reaction (2S)-2-hydroxy-3-oxobutyl phosphate + 5-amino-6-(D-ribitylamino)uracil = 6,7-dimethyl-8-(1-D-ribityl)lumazine + phosphate + 2 H2O + H(+). Its pathway is cofactor biosynthesis; riboflavin biosynthesis; riboflavin from 2-hydroxy-3-oxobutyl phosphate and 5-amino-6-(D-ribitylamino)uracil: step 1/2. Functionally, catalyzes the formation of 6,7-dimethyl-8-ribityllumazine by condensation of 5-amino-6-(D-ribitylamino)uracil with 3,4-dihydroxy-2-butanone 4-phosphate. This is the penultimate step in the biosynthesis of riboflavin. The protein is 6,7-dimethyl-8-ribityllumazine synthase of Clostridium kluyveri (strain NBRC 12016).